Reading from the N-terminus, the 963-residue chain is Ubiquitin carboxyl-terminal hydrolase 11 (963 aa).

A disordered region spans residues 64-93; it reads VTEDREPQHEELPGLDSQWRQIENGESGRE. Positions 65–75 are enriched in basic and acidic residues; that stretch reads TEDREPQHEEL. Residues 76-184 form the DUSP domain; sequence PGLDSQWRQI…GQPPIERKVI (109 aa). K245 bears the N6-acetyllysine mark. In terms of domain architecture, USP spans 309–930; the sequence is CGLTNLGNTC…AAYVLFYQRQ (622 aa). The active-site Nucleophile is the C318. 2 disordered regions span residues 644 to 691 and 716 to 735; these read TKPN…SGVT and LFTLQTVNSNGTSDRTTSPE. The residue at position 648 (S648) is a Phosphoserine. Positions 649–665 are enriched in acidic residues; that stretch reads DDEDDGDEKEDDEEDKD. Positions 717 to 731 are enriched in polar residues; the sequence is FTLQTVNSNGTSDRT. Phosphoserine is present on S733. The active-site Proton acceptor is the H888. The segment covering 938-957 has biased composition (low complexity); it reads SPAGSSGAPASPACSSPPSS. A disordered region spans residues 938 to 963; sequence SPAGSSGAPASPACSSPPSSEFMDVN. Phosphoserine is present on S948.

It belongs to the peptidase C19 family. Monomer. Associated component of the Polycomb group (PcG) multiprotein PRC1-like complex. Interacts with RANBP9/RANBPM. Interacts with BRCA2. Interacts with CHUK/IKKA. Interacts with NFKBIA. Interacts with SPRY3, RAE1, MYCBP2/PAM, and KCTD6. In terms of assembly, (Microbial infection) Interacts with papilloma virus protein 16E7.

The protein resides in the nucleus. The protein localises to the cytoplasm. It localises to the chromosome. The enzyme catalyses Thiol-dependent hydrolysis of ester, thioester, amide, peptide and isopeptide bonds formed by the C-terminal Gly of ubiquitin (a 76-residue protein attached to proteins as an intracellular targeting signal).. In terms of biological role, protease that can remove conjugated ubiquitin from target proteins and polyubiquitin chains. Inhibits the degradation of target proteins by the proteasome. Cleaves preferentially 'Lys-6' and 'Lys-63'-linked ubiquitin chains. Has lower activity with 'Lys-11' and 'Lys-33'-linked ubiquitin chains, and extremely low activity with 'Lys-27', 'Lys-29' and 'Lys-48'-linked ubiquitin chains (in vitro). Plays a role in the regulation of pathways leading to NF-kappa-B activation. Plays a role in the regulation of DNA repair after double-stranded DNA breaks. Acts as a chromatin regulator via its association with the Polycomb group (PcG) multiprotein PRC1-like complex; may act by deubiquitinating components of the PRC1-like complex. Promotes cell proliferation by deubiquitinating phosphorylated E2F1. The sequence is that of Ubiquitin carboxyl-terminal hydrolase 11 (USP11) from Homo sapiens (Human).